The following is a 473-amino-acid chain: Vasculin (473 aa).

Disordered stretches follow at residues 1–25 (MAQH…SSLN), 45–169 (RRHN…KSRA), and 191–342 (VGNL…QERD). At Ser-49 the chain carries Phosphoserine. The residue at position 87 (Arg-87) is an Omega-N-methylarginine. A compositionally biased stretch (low complexity) spans 93–107 (GSSRSRSSIFHSGKS). The span at 119-133 (ETGRKEDKRERKQFE) shows a compositional bias: basic and acidic residues. Composition is skewed to polar residues over residues 194-204 (LPSQPVKNGTG) and 251-286 (AFKS…QQPR). A phosphoserine mark is found at Ser-274, Ser-276, Ser-322, and Ser-381. Residues 293-329 (MRTDKKSEFLKALKRDRVEEEHEDESRAGSEKDDDSF) are compositionally biased toward basic and acidic residues. The tract at residues 444-473 (GPWKNSTFKPTTENDDTETSSSDTSDDDDV) is disordered. The span at 456 to 473 (ENDDTETSSSDTSDDDDV) shows a compositional bias: acidic residues.

This sequence belongs to the vasculin family. Interacts with GTF2B, GTF2F2, RNA polymerase II and TBP.

Its subcellular location is the nucleus. Functionally, functions as a GC-rich promoter-specific transactivating transcription factor. In Pongo abelii (Sumatran orangutan), this protein is Vasculin (GPBP1).